A 208-amino-acid polypeptide reads, in one-letter code: Protein-L-isoaspartate O-methyltransferase (208 aa).

Ser-59 is an active-site residue.

The protein belongs to the methyltransferase superfamily. L-isoaspartyl/D-aspartyl protein methyltransferase family.

The protein localises to the cytoplasm. The catalysed reaction is [protein]-L-isoaspartate + S-adenosyl-L-methionine = [protein]-L-isoaspartate alpha-methyl ester + S-adenosyl-L-homocysteine. Its function is as follows. Catalyzes the methyl esterification of L-isoaspartyl residues in peptides and proteins that result from spontaneous decomposition of normal L-aspartyl and L-asparaginyl residues. It plays a role in the repair and/or degradation of damaged proteins. This chain is Protein-L-isoaspartate O-methyltransferase, found in Escherichia coli O1:K1 / APEC.